The following is a 175-amino-acid chain: Gamma-crystallin A (175 aa).

2 consecutive Beta/gamma crystallin 'Greek key' domains span residues 2–40 (GKIT…RVDV) and 41–83 (HSWF…RLIP). The segment at 84–88 (QHTGT) is connecting peptide. Beta/gamma crystallin 'Greek key' domains lie at 89–129 (FRMR…RVLE) and 130–172 (GSWV…RRVM).

It belongs to the beta/gamma-crystallin family.

Functionally, crystallins are the dominant structural components of the vertebrate eye lens. The protein is Gamma-crystallin A (CRYGA) of Bos taurus (Bovine).